We begin with the raw amino-acid sequence, 110 residues long: Light-harvesting complex-like protein OHP1, chloroplastic (110 aa).

Residues Met-1–Ala-41 constitute a chloroplast transit peptide. Topologically, residues Ala-42–Arg-74 are stromal. A helical membrane pass occupies residues Ala-75–Leu-95. Residues Glu-96–Leu-110 are Lumenal-facing.

It belongs to the ELIP/psbS family. May bind chlorophyll and form dimers in the thylakoid membrane. Component of a high molecular weight complex containing OHP1, OHP2 and HCF244, and PSII core proteins D1/D2, HCF136 and HCF173. Interacts with HCF244. Forms a trimeric complex with OHP2 and HCF244 that mutually stabilizes each subunit. In terms of tissue distribution, mostly expressed in cotyledons and shoot apices.

The protein localises to the plastid. Its subcellular location is the chloroplast thylakoid membrane. Functionally, may play a photoprotective role in the thylakoid membrane in response to light stress. Involved in photosystems I (PSI) and II (PSII) core proteins function. Forms a trimeric complex with OHP2 and HCF244 that is required to promote PSII core subunit assembly. The trimeric complex forms a transient PSII reaction center-like complex with PsbA, PsbD, PsbE, PsbF and PsbI subunits in thylakoids for early assembly of PSII as well as PSII repair. The trimeric complex is required for the recruitment of ribosomes to the psbA mRNA during PSII biogenesis and repair. Forms a heterodimer with OHP1 that binds chlorophylls and carotenoids, and that may function in the delivery of pigments to the PsbA subunit of PSII. The protein is Light-harvesting complex-like protein OHP1, chloroplastic of Arabidopsis thaliana (Mouse-ear cress).